Here is a 528-residue protein sequence, read N- to C-terminus: Na(+)/H(+) antiporter NhaB (528 aa).

The next 11 membrane-spanning stretches (helical) occupy residues 23 to 45 (FAILSFLAINPILFYLNPFIAGW), 66 to 86 (PGGLLAIEAVIIGMTSPTQVL), 95 to 115 (VLLLLVFMVAGIYFMKQLLLY), 130 to 164 (VSMLFCIASAFLSAFLDALTVIAVIITVAVGFYSI), 203 to 223 (LLMHAGVGTALGGVCTMVGEP), 241 to 261 (IRMSPVTVPVFFAGILTCFIV), 310 to 330 (LIVGLAFHLASVGLIGLSVII), 349 to 369 (EEALPFTALLAVFFAVVGVII), 390 to 410 (LVIFYIANGLLSMVSDNVFVG), 448 to 468 (ATPNGQAAFLFLLTSALAPLI), and 475 to 495 (MVMMALPYTIVLSIVGILAIE).

Belongs to the NhaB Na(+)/H(+) (TC 2.A.34) antiporter family.

It localises to the cell inner membrane. The enzyme catalyses 2 Na(+)(in) + 3 H(+)(out) = 2 Na(+)(out) + 3 H(+)(in). Functionally, na(+)/H(+) antiporter that extrudes sodium in exchange for external protons. This chain is Na(+)/H(+) antiporter NhaB, found in Shewanella amazonensis (strain ATCC BAA-1098 / SB2B).